A 182-amino-acid chain; its full sequence is Autophagy-related protein 31 (182 aa).

The tract at residues 105-134 (LTSGNDTGGDAGKKSGDISDPAAGPDVPRE) is disordered.

The protein localises to the cytoplasm. It is found in the cytoskeleton. It localises to the preautophagosomal structure. Functionally, plays a role in starvation-induced autophagy. Involved in mitophagy. Functions with ATG17 and ATG29 at the preautophagosomal structure (PAS) in order to form normal autophagosomes under starvation conditions. May be involved in microtubule function, such as chromosome segregation and karyogamy. This Candida glabrata (strain ATCC 2001 / BCRC 20586 / JCM 3761 / NBRC 0622 / NRRL Y-65 / CBS 138) (Yeast) protein is Autophagy-related protein 31 (CIS1).